A 208-amino-acid chain; its full sequence is MKIVEVKHPLVKHKLGLMRETDISTKRFRELASEVGSLLTYEATADLETEKVTIEGWNGPVEVDQIKGKKITVVPILRAGLGMMEGVLENVPSARISVVGMYRNEETLEPVPYFQKLVSNIDERMALIVDPMLATGGSVIATIDLLKKAGCSSIKVLVLVAAPEGIAALEKAHPDVELYTASIDQGLNEHGYIIPGLGDAGDKIFGTK.

Residues Arg-78, Arg-103, and 130–138 (DPMLATGGS) contribute to the 5-phospho-alpha-D-ribose 1-diphosphate site. Uracil contacts are provided by residues Ile-193 and 198 to 200 (GDA). 5-phospho-alpha-D-ribose 1-diphosphate is bound at residue Asp-199.

It belongs to the UPRTase family. Mg(2+) serves as cofactor.

The enzyme catalyses UMP + diphosphate = 5-phospho-alpha-D-ribose 1-diphosphate + uracil. It functions in the pathway pyrimidine metabolism; UMP biosynthesis via salvage pathway; UMP from uracil: step 1/1. Its activity is regulated as follows. Allosterically activated by GTP. Its function is as follows. Catalyzes the conversion of uracil and 5-phospho-alpha-D-ribose 1-diphosphate (PRPP) to UMP and diphosphate. The sequence is that of Uracil phosphoribosyltransferase from Escherichia fergusonii (strain ATCC 35469 / DSM 13698 / CCUG 18766 / IAM 14443 / JCM 21226 / LMG 7866 / NBRC 102419 / NCTC 12128 / CDC 0568-73).